Reading from the N-terminus, the 305-residue chain is ATP synthase gamma chain (305 aa).

It belongs to the ATPase gamma chain family. In terms of assembly, F-type ATPases have 2 components, CF(1) - the catalytic core - and CF(0) - the membrane proton channel. CF(1) has five subunits: alpha(3), beta(3), gamma(1), delta(1), epsilon(1). CF(0) has three main subunits: a, b and c.

It is found in the cell membrane. Produces ATP from ADP in the presence of a proton gradient across the membrane. The gamma chain is believed to be important in regulating ATPase activity and the flow of protons through the CF(0) complex. This is ATP synthase gamma chain from Streptomyces coelicolor (strain ATCC BAA-471 / A3(2) / M145).